The sequence spans 188 residues: Pallidipin (188 aa).

A signal peptide spans 1–18; sequence MKVIIAATLLGILMHAFA. 3 disulfide bridges follow: cysteine 21/cysteine 137, cysteine 55/cysteine 184, and cysteine 89/cysteine 105.

The protein belongs to the calycin superfamily. Triabin family. As to expression, expressed in salivary glands.

It is found in the secreted. Its function is as follows. Has been described as a specific inhibitor of collagen-induced platelet aggregation. However, as it does not affect platelet shape change or adhesion, it is plausible that it exerts its antiplatelet activity by a mechanism similar to that of triplatin, moubatin and dipetalodipin as scavenging eicosanoids involved in inflammation such as thromboxane A2 (TXA2). The chain is Pallidipin from Meccus pallidipennis (Triatomine bug).